Reading from the N-terminus, the 87-residue chain is Small ribosomal subunit protein bS20 (87 aa).

The disordered stretch occupies residues 1–22 (MAHHKSALKRIKQNKRKQFRNK).

This sequence belongs to the bacterial ribosomal protein bS20 family.

Binds directly to 16S ribosomal RNA. The chain is Small ribosomal subunit protein bS20 from Geobacter metallireducens (strain ATCC 53774 / DSM 7210 / GS-15).